The following is a 756-amino-acid chain: 5-methyltetrahydropteroyltriglutamate--homocysteine methyltransferase (756 aa).

Residues 20–23 (RELK) and Lys-114 each bind 5-methyltetrahydropteroyltri-L-glutamate. Residues 433–435 (IGS) and Glu-486 each bind L-homocysteine. Residues 433-435 (IGS) and Glu-486 contribute to the L-methionine site. 5-methyltetrahydropteroyltri-L-glutamate contacts are provided by residues 517–518 (RC) and Trp-563. Asp-601 is an L-homocysteine binding site. Position 601 (Asp-601) interacts with L-methionine. Glu-607 contacts 5-methyltetrahydropteroyltri-L-glutamate. The Zn(2+) site is built by His-643, Cys-645, and Glu-667. The Proton donor role is filled by His-696. Cys-728 contacts Zn(2+).

It belongs to the vitamin-B12 independent methionine synthase family. It depends on Zn(2+) as a cofactor.

The enzyme catalyses 5-methyltetrahydropteroyltri-L-glutamate + L-homocysteine = tetrahydropteroyltri-L-glutamate + L-methionine. It participates in amino-acid biosynthesis; L-methionine biosynthesis via de novo pathway; L-methionine from L-homocysteine (MetE route): step 1/1. Functionally, catalyzes the transfer of a methyl group from 5-methyltetrahydrofolate to homocysteine resulting in methionine formation. In Mycolicibacterium paratuberculosis (strain ATCC BAA-968 / K-10) (Mycobacterium paratuberculosis), this protein is 5-methyltetrahydropteroyltriglutamate--homocysteine methyltransferase.